The sequence spans 77 residues: Conotoxin LiC42 (77 aa).

The signal sequence occupies residues 1–22 (MKLTCVLIIAVLFLTASQLITA). A propeptide spanning residues 23 to 47 (DYSRDKQEYGAERLRDAMGKFKGSR) is cleaved from the precursor. 3 disulfide bridges follow: cysteine 49–cysteine 62, cysteine 56–cysteine 67, and cysteine 61–cysteine 76.

It belongs to the conotoxin O1 superfamily. Expressed by the venom duct.

Its subcellular location is the secreted. The polypeptide is Conotoxin LiC42 (Conus lividus (Livid cone)).